The following is a 539-amino-acid chain: Probable protein kinase UbiB (539 aa).

Residues 125 to 493 (RFDVEPLASA…RRRQGDRWAL (369 aa)) form the Protein kinase domain. ATP-binding positions include 131 to 139 (LASASVAQV) and K153. D288 serves as the catalytic Proton acceptor. A run of 2 helical transmembrane segments spans residues 495-515 (LLGA…AEAA) and 517-537 (LAAP…YLIV).

This sequence belongs to the ABC1 family. UbiB subfamily.

The protein localises to the cell inner membrane. It participates in cofactor biosynthesis; ubiquinone biosynthesis [regulation]. Is probably a protein kinase regulator of UbiI activity which is involved in aerobic coenzyme Q (ubiquinone) biosynthesis. The protein is Probable protein kinase UbiB of Pseudomonas putida (strain W619).